A 236-amino-acid chain; its full sequence is MADDWESAADSEVVIRPTGAASVNKWEGEDEDEDIKDSWEDEEEKKDEEKPTKTEAPAKPKPNKALKAKLEQQARLEEEAEAQRVANLSPAEKLAEKLRLQKIQEASDLKHAQEAFGVTSTCGGLDAFNPESKEEFKEFGATLSWKVSQFRESEHFPQFVEDLVRSLCVNLSAADIKKVKMNVEILHSEKLKLEKANAKKPAGKGKGKVTLRTENDDIDGYQKYGNDFTEDYDDFM.

Positions 1–84 (MADDWESAAD…RLEEEAEAQR (84 aa)) are disordered. Over residues 28-46 (GEDEDEDIKDSWEDEEEKK) the composition is skewed to acidic residues. Basic and acidic residues-rich tracts occupy residues 47-58 (DEEKPTKTEAPA) and 68-77 (AKLEQQARLE).

It belongs to the eIF-3 subunit J family. In terms of assembly, component of the eukaryotic translation initiation factor 3 (eIF-3) complex. The eIF-3 complex interacts with pix.

The protein localises to the cytoplasm. In terms of biological role, component of the eukaryotic translation initiation factor 3 (eIF-3) complex, which is involved in protein synthesis of a specialized repertoire of mRNAs and, together with other initiation factors, stimulates binding of mRNA and methionyl-tRNAi to the 40S ribosome. The eIF-3 complex specifically targets and initiates translation of a subset of mRNAs involved in cell proliferation. The sequence is that of Eukaryotic translation initiation factor 3 subunit J from Drosophila yakuba (Fruit fly).